A 117-amino-acid polypeptide reads, in one-letter code: Ribonuclease P protein component 4 (117 aa).

Zn(2+) is bound by residues Cys63, Cys66, Cys92, and Cys95.

It belongs to the eukaryotic/archaeal RNase P protein component 4 family. In terms of assembly, consists of a catalytic RNA component and at least 4 protein subunits. Forms a subcomplex with Rnp1 which stimulates the catalytic RNA. The cofactor is Zn(2+).

The protein localises to the cytoplasm. It carries out the reaction Endonucleolytic cleavage of RNA, removing 5'-extranucleotides from tRNA precursor.. Its function is as follows. Part of ribonuclease P, a protein complex that generates mature tRNA molecules by cleaving their 5'-ends. The RNA is catalytic, but its KM for pre-tRNA is 170-fold decreased in the presence of the 4 known protein subunits (Rnp1-4). The protein subunits also decrease the amount of Mg(2+) needed for activity. This chain is Ribonuclease P protein component 4, found in Pyrococcus furiosus (strain ATCC 43587 / DSM 3638 / JCM 8422 / Vc1).